Reading from the N-terminus, the 208-residue chain is UPF0637 protein BCG9842_B1177 (208 aa).

It belongs to the UPF0637 family.

The chain is UPF0637 protein BCG9842_B1177 from Bacillus cereus (strain G9842).